A 125-amino-acid chain; its full sequence is Small ribosomal subunit protein uS13 (125 aa).

A disordered region spans residues 93–125 (RRGLPVRGQRTKTNARTRKGPKRTVAGKKKAGR).

Belongs to the universal ribosomal protein uS13 family. In terms of assembly, part of the 30S ribosomal subunit. Forms a loose heterodimer with protein S19. Forms two bridges to the 50S subunit in the 70S ribosome.

In terms of biological role, located at the top of the head of the 30S subunit, it contacts several helices of the 16S rRNA. In the 70S ribosome it contacts the 23S rRNA (bridge B1a) and protein L5 of the 50S subunit (bridge B1b), connecting the 2 subunits; these bridges are implicated in subunit movement. Contacts the tRNAs in the A and P-sites. The polypeptide is Small ribosomal subunit protein uS13 (Renibacterium salmoninarum (strain ATCC 33209 / DSM 20767 / JCM 11484 / NBRC 15589 / NCIMB 2235)).